The primary structure comprises 1484 residues: Chromosome partition protein MukB (1484 aa).

34–41 (GGNGAGKS) contributes to the ATP binding site. Coiled-coil stretches lie at residues 338–415 (NLVQ…RAIQ), 496–604 (QTAR…ALAW), 781–805 (AARE…ATLS), 835–868 (EAEM…HYDQ), 903–1115 (HDAQ…SAKA), and 1206–1265 (DDPV…LQAV). A flexible hinge region spans residues 666-783 (PGGTDDARLT…AVPLFGRAAR (118 aa)).

This sequence belongs to the SMC family. MukB subfamily. In terms of assembly, homodimerization via its hinge domain. Binds to DNA via its C-terminal region. Interacts, and probably forms a ternary complex, with MukE and MukF via its C-terminal region. The complex formation is stimulated by calcium or magnesium. Interacts with tubulin-related protein FtsZ.

The protein localises to the cytoplasm. It is found in the nucleoid. Its function is as follows. Plays a central role in chromosome condensation, segregation and cell cycle progression. Functions as a homodimer, which is essential for chromosome partition. Involved in negative DNA supercoiling in vivo, and by this means organize and compact chromosomes. May achieve or facilitate chromosome segregation by condensation DNA from both sides of a centrally located replisome during cell division. The polypeptide is Chromosome partition protein MukB (Sodalis glossinidius (strain morsitans)).